Consider the following 321-residue polypeptide: Ubiquitin carboxyl-terminal hydrolase ubh-4 (321 aa).

One can recognise a UCH catalytic domain in the interval 6–220; it reads SWCLIESDPG…ITFNLMALVP (215 aa). Cys83 (nucleophile) is an active-site residue. Residue His158 is the Proton donor of the active site. The ULD domain occupies 273–301; sequence NYTPFVIELMKILAKEGKLVGLVDNAYQA.

This sequence belongs to the peptidase C12 family. As to quaternary structure, interacts with proteasome 19S subunit rpn-13. Highly expressed in intestine and to a lesser extent in other tissues including muscles and neurons.

It carries out the reaction Thiol-dependent hydrolysis of ester, thioester, amide, peptide and isopeptide bonds formed by the C-terminal Gly of ubiquitin (a 76-residue protein attached to proteins as an intracellular targeting signal).. Ubiquitin-protein hydrolase involved both in the processing of ubiquitin precursors and of ubiquitinated proteins. This enzyme is a thiol protease that recognizes and hydrolyzes a peptide bond at the C-terminal glycine of ubiquitin. This chain is Ubiquitin carboxyl-terminal hydrolase ubh-4, found in Caenorhabditis elegans.